We begin with the raw amino-acid sequence, 557 residues long: Dihydroxy-acid dehydratase (557 aa).

Aspartate 78 contributes to the Mg(2+) binding site. Cysteine 119 is a [2Fe-2S] cluster binding site. The Mg(2+) site is built by aspartate 120 and lysine 121. Lysine 121 carries the post-translational modification N6-carboxylysine. Cysteine 192 lines the [2Fe-2S] cluster pocket. Glutamate 442 contributes to the Mg(2+) binding site. Catalysis depends on serine 468, which acts as the Proton acceptor.

This sequence belongs to the IlvD/Edd family. As to quaternary structure, homodimer. [2Fe-2S] cluster serves as cofactor. Requires Mg(2+) as cofactor.

It catalyses the reaction (2R)-2,3-dihydroxy-3-methylbutanoate = 3-methyl-2-oxobutanoate + H2O. It carries out the reaction (2R,3R)-2,3-dihydroxy-3-methylpentanoate = (S)-3-methyl-2-oxopentanoate + H2O. It functions in the pathway amino-acid biosynthesis; L-isoleucine biosynthesis; L-isoleucine from 2-oxobutanoate: step 3/4. Its pathway is amino-acid biosynthesis; L-valine biosynthesis; L-valine from pyruvate: step 3/4. In terms of biological role, functions in the biosynthesis of branched-chain amino acids. Catalyzes the dehydration of (2R,3R)-2,3-dihydroxy-3-methylpentanoate (2,3-dihydroxy-3-methylvalerate) into 2-oxo-3-methylpentanoate (2-oxo-3-methylvalerate) and of (2R)-2,3-dihydroxy-3-methylbutanoate (2,3-dihydroxyisovalerate) into 2-oxo-3-methylbutanoate (2-oxoisovalerate), the penultimate precursor to L-isoleucine and L-valine, respectively. This Bacillus thuringiensis subsp. konkukian (strain 97-27) protein is Dihydroxy-acid dehydratase.